The chain runs to 234 residues: Endo-1,4-beta-xylanase 1 (234 aa).

The signal sequence occupies residues 1–21 (MVSFIFTRIILFAAAINGAVA). Residues Asn25 and Asn75 are each glycosylated (N-linked (GlcNAc...) asparagine). One can recognise a GH11 domain in the interval 38 to 234 (SGTPSSTGYS…SSGFSSITVA (197 aa)). Glu124 functions as the Nucleophile in the catalytic mechanism. Residue Asn167 is glycosylated (N-linked (GlcNAc...) asparagine). Residue Glu221 is the Proton donor of the active site.

Belongs to the glycosyl hydrolase 11 (cellulase G) family.

Its subcellular location is the secreted. The catalysed reaction is Endohydrolysis of (1-&gt;4)-beta-D-xylosidic linkages in xylans.. The protein operates within glycan degradation; xylan degradation. In terms of biological role, endo-1,4-beta-xylanase involved in the hydrolysis of xylan, a major structural heterogeneous polysaccharide found in plant biomass representing the second most abundant polysaccharide in the biosphere, after cellulose. In Leucoagaricus gongylophorus (Leaf-cutting ant fungus), this protein is Endo-1,4-beta-xylanase 1 (Xyn1).